A 466-amino-acid polypeptide reads, in one-letter code: Replication termination factor 1 (466 aa).

2 DNA-binding domain regions span residues arginine 94–lysine 249 and tyrosine 250–leucine 421. HTH myb-type domains are found at residues asparagine 251 to glutamate 304 and isoleucine 305 to isoleucine 363. 2 consecutive DNA-binding regions (H-T-H motif) follow at residues tryptophan 278 to isoleucine 300 and tryptophan 336 to isoleucine 359.

Its subcellular location is the nucleus. In terms of biological role, mediates site-specific replication termination at the polar replication barrier RTS1, a barrier which ensures that replication of the mat1 locus in S.pombe occurs in the centromere-proximal direction. The chain is Replication termination factor 1 (rtf1) from Schizosaccharomyces pombe (strain 972 / ATCC 24843) (Fission yeast).